Consider the following 105-residue polypeptide: Ketoisovalerate oxidoreductase subunit VorD (105 aa).

4Fe-4S ferredoxin-type domains lie at 44–73 (FMPV…IKED) and 74–103 (GFVA…MVRE). The [4Fe-4S] cluster site is built by Cys-53, Cys-56, Cys-59, Cys-63, Cys-83, Cys-86, Cys-89, and Cys-93.

Heterotetramer of one alpha, one beta, one delta and one gamma chain. [4Fe-4S] cluster serves as cofactor.

The enzyme catalyses 3-methyl-2-oxobutanoate + 2 oxidized [2Fe-2S]-[ferredoxin] + CoA = 2-methylpropanoyl-CoA + 2 reduced [2Fe-2S]-[ferredoxin] + CO2 + H(+). This Pyrococcus horikoshii (strain ATCC 700860 / DSM 12428 / JCM 9974 / NBRC 100139 / OT-3) protein is Ketoisovalerate oxidoreductase subunit VorD (vorD).